A 481-amino-acid polypeptide reads, in one-letter code: MITIEQLLDILKKDHNFREVLDADGYHYHYQGLSFERLSYDSRQVDGKTLFFAKGATFKADYLKEAITNGLQLYISEVDYELGIPVVLVTDIKKAMSLIAMAFYGNPQEKLKLLAFTGTKGKTTAAYFAYHMLKESYKPAMFSTMNTTLDGKTFFKSQLTTPESLDLFAMMAECVTNGMTHLIMEVSSQAYLVDRVYGLTFDVGVFLNISPDHIGPIEHPTFEDYFYHKRLLMENSRAVVINSGMDHFSFLADQVADQEHVFYGPLSDNQITTSQAFSFEAKGQLAGHYDIQLIGHFNQENAMAAGLACLRLGASLADIQKGIAKTRVPGRMEVLTMTNHAKVFVDYAHNGDSLEKLLSVVEEHQTGKLMLILGAPGNKGESRRADFGRVIHQHPNLTVILTADDPNFEDPEDISKEIASHIARPVEIISDREQAIQKAMSLCQGAKDAVIIAGKGADAYQIVKGQQVAYAGDLAIAKHYL.

Position 42 (Ser42) interacts with UDP-N-acetyl-alpha-D-muramoyl-L-alanyl-D-glutamate. ATP is bound at residue Gly118–Thr124. UDP-N-acetyl-alpha-D-muramoyl-L-alanyl-D-glutamate-binding positions include Gln158, Thr160–Thr161, Ser187, and Arg195. Lys229 is subject to N6-carboxylysine. The short motif at Asp404–Asn407 is the L-lysine recognition motif element.

It belongs to the MurCDEF family. MurE subfamily. Carboxylation is probably crucial for Mg(2+) binding and, consequently, for the gamma-phosphate positioning of ATP.

Its subcellular location is the cytoplasm. The enzyme catalyses UDP-N-acetyl-alpha-D-muramoyl-L-alanyl-D-glutamate + L-lysine + ATP = UDP-N-acetyl-alpha-D-muramoyl-L-alanyl-gamma-D-glutamyl-L-lysine + ADP + phosphate + H(+). The protein operates within cell wall biogenesis; peptidoglycan biosynthesis. Its function is as follows. Catalyzes the addition of L-lysine to the nucleotide precursor UDP-N-acetylmuramoyl-L-alanyl-D-glutamate (UMAG) in the biosynthesis of bacterial cell-wall peptidoglycan. The chain is UDP-N-acetylmuramoyl-L-alanyl-D-glutamate--L-lysine ligase from Streptococcus pyogenes serotype M18 (strain MGAS8232).